The primary structure comprises 417 residues: Signal recognition particle receptor FtsY (417 aa).

GTP contacts are provided by residues G228–T235, D310–R314, and T368–D371.

This sequence belongs to the GTP-binding SRP family. FtsY subfamily. In terms of assembly, part of the signal recognition particle protein translocation system, which is composed of SRP and FtsY.

The protein localises to the cell membrane. The protein resides in the cytoplasm. The catalysed reaction is GTP + H2O = GDP + phosphate + H(+). Its function is as follows. Involved in targeting and insertion of nascent membrane proteins into the cytoplasmic membrane. Acts as a receptor for the complex formed by the signal recognition particle (SRP) and the ribosome-nascent chain (RNC). In Methanosarcina acetivorans (strain ATCC 35395 / DSM 2834 / JCM 12185 / C2A), this protein is Signal recognition particle receptor FtsY.